A 285-amino-acid polypeptide reads, in one-letter code: Probable xyloglucan endotransglucosylase/hydrolase protein 12 (285 aa).

Positions 1–25 (MAAFATKQSPLLLASLLILIGVATG) are cleaved as a signal peptide. A GH16 domain is found at 26–215 (SFYDSFDITW…WTNAPFSASY (190 aa)). Residue Glu-101 is the Nucleophile of the active site. The active-site Proton donor is Glu-105. Glu-105 is a binding site for xyloglucan. N-linked (GlcNAc...) asparagine glycosylation occurs at Asn-109. Residues 118 to 120 (HTN), 128 to 130 (NRE), 194 to 195 (DW), and Gly-199 each bind xyloglucan. Intrachain disulfides connect Cys-224/Cys-235 and Cys-268/Cys-282. Residue Arg-273 participates in xyloglucan binding.

It belongs to the glycosyl hydrolase 16 family. XTH group 2 subfamily. Contains at least one intrachain disulfide bond essential for its enzymatic activity. In terms of tissue distribution, root specific.

It localises to the secreted. Its subcellular location is the cell wall. The protein resides in the extracellular space. It is found in the apoplast. The catalysed reaction is breaks a beta-(1-&gt;4) bond in the backbone of a xyloglucan and transfers the xyloglucanyl segment on to O-4 of the non-reducing terminal glucose residue of an acceptor, which can be a xyloglucan or an oligosaccharide of xyloglucan.. In terms of biological role, catalyzes xyloglucan endohydrolysis (XEH) and/or endotransglycosylation (XET). Cleaves and religates xyloglucan polymers, an essential constituent of the primary cell wall, and thereby participates in cell wall construction of growing tissues. This is Probable xyloglucan endotransglucosylase/hydrolase protein 12 (XTH12) from Arabidopsis thaliana (Mouse-ear cress).